The primary structure comprises 101 residues: Small ribosomal subunit protein uS14 (101 aa).

The protein belongs to the universal ribosomal protein uS14 family. Part of the 30S ribosomal subunit. Contacts proteins S3 and S10.

Its function is as follows. Binds 16S rRNA, required for the assembly of 30S particles and may also be responsible for determining the conformation of the 16S rRNA at the A site. This Cronobacter sakazakii (strain ATCC BAA-894) (Enterobacter sakazakii) protein is Small ribosomal subunit protein uS14.